Consider the following 496-residue polypeptide: Aminoacetaldehyde dehydrogenase (496 aa).

NADH-binding residues include L166, W168, K192, S246, T249, and Y256. The Proton acceptor role is filled by E268. C269 is a binding site for NADH. C303 functions as the Nucleophile in the catalytic mechanism. NADH-binding residues include K353 and E398.

It belongs to the aldehyde dehydrogenase family. Homotetramer, formed by two symmetrical dimers.

The enzyme catalyses aminoacetaldehyde + NAD(+) + H2O = glycine + NADH + 2 H(+). The catalysed reaction is 3-aminopropanal + NAD(+) + H2O = beta-alanine + NADH + 2 H(+). NAD(+)-dependent aminoaldehyde dehydrogenase highly efficient with protonated aminoacetaldehyde (ACTAL) and 3-aminopropanaldehyde (APAL). Likely participates in a still uncharacterized metabolic pathway present in proteobacteria species, in which ACTAL might be an intermediate, yielding glycine. Highly prefers NAD(+) over NADP(+). Shows very poor activity with acetaldehyde, propanaldehyde, butanaldehyde, pentanaldehyde, dimethylaminoacetaldehyde, trimethylaminoacetaldehyde (betaine aldehyde), trimethylaminobutanaldehyde, short aliphatic hydroxyaldehydes such as 3-hydroxypropanaldehyde and 2-hydroxypropanaldehyde (lactaldehyde), and aromatic aldehydes. The polypeptide is Aminoacetaldehyde dehydrogenase (Pseudomonas aeruginosa (strain ATCC 15692 / DSM 22644 / CIP 104116 / JCM 14847 / LMG 12228 / 1C / PRS 101 / PAO1)).